We begin with the raw amino-acid sequence, 341 residues long: N-acetyl-gamma-glutamyl-phosphate reductase (341 aa).

Cys147 is a catalytic residue.

Belongs to the NAGSA dehydrogenase family. Type 1 subfamily.

It is found in the cytoplasm. It catalyses the reaction N-acetyl-L-glutamate 5-semialdehyde + phosphate + NADP(+) = N-acetyl-L-glutamyl 5-phosphate + NADPH + H(+). The protein operates within amino-acid biosynthesis; L-arginine biosynthesis; N(2)-acetyl-L-ornithine from L-glutamate: step 3/4. In terms of biological role, catalyzes the NADPH-dependent reduction of N-acetyl-5-glutamyl phosphate to yield N-acetyl-L-glutamate 5-semialdehyde. The polypeptide is N-acetyl-gamma-glutamyl-phosphate reductase (Staphylococcus epidermidis (strain ATCC 35984 / DSM 28319 / BCRC 17069 / CCUG 31568 / BM 3577 / RP62A)).